We begin with the raw amino-acid sequence, 479 residues long: Protein phosphatase 1B (479 aa).

Positions 1-14 (MGAFLDKPKTEKHN) are enriched in basic and acidic residues. A disordered region spans residues 1-20 (MGAFLDKPKTEKHNAHGAGN). Glycine 2 carries the N-myristoyl glycine lipid modification. Residue lysine 12 forms a Glycyl lysine isopeptide (Lys-Gly) (interchain with G-Cter in ISG15) linkage. Positions 23-295 (RYGLSSMQGW…DNMSIVLVCF (273 aa)) constitute a PPM-type phosphatase domain. Residues aspartate 60 and glycine 61 each contribute to the Mn(2+) site. Lysine 142 is covalently cross-linked (Glycyl lysine isopeptide (Lys-Gly) (interchain with G-Cter in ISG15)). Aspartate 243 and aspartate 286 together coordinate Mn(2+). Serine 386 is modified (phosphoserine). Residues 423–479 (VEGEESPAEPAATATSSNSDAGNPVTMQESHTESESGLAELDSSNEDAGTKMSGEKI) form a disordered region. Low complexity predominate over residues 430–439 (AEPAATATSS). Polar residues predominate over residues 440 to 451 (NSDAGNPVTMQE).

This sequence belongs to the PP2C family. Monomer. Interacts with PAK6. Interacts with the phosphorylated form of IKBKB/IKKB. It depends on Mg(2+) as a cofactor. Requires Mn(2+) as cofactor. Isgylation negatively regulates its activity. Post-translationally, N-myristoylation is essential for the recognition of its substrates for dephosphorylation. In terms of tissue distribution, highly expressed in heart and skeletal muscle.

It localises to the cytoplasm. It is found in the cytosol. The protein localises to the membrane. It carries out the reaction O-phospho-L-seryl-[protein] + H2O = L-seryl-[protein] + phosphate. The catalysed reaction is O-phospho-L-threonyl-[protein] + H2O = L-threonyl-[protein] + phosphate. Functionally, enzyme with a broad specificity. Dephosphorylates CDK2 and CDK6 in vitro. Dephosphorylates PRKAA1 and PRKAA2. Inhibits TBK1-mediated antiviral signaling by dephosphorylating it at 'Ser-172'. Plays an important role in the termination of TNF-alpha-mediated NF-kappa-B activation through dephosphorylating and inactivating IKBKB/IKKB. This Homo sapiens (Human) protein is Protein phosphatase 1B (PPM1B).